The following is a 21-amino-acid chain: Misgurin (21 aa).

A disordered region spans residues 1–21 (RQRVEELSKFSKKGAAARRRK). Residues 10 to 21 (FSKKGAAARRRK) are compositionally biased toward basic residues.

The protein localises to the secreted. Strong antimicrobial activity against several Gram-positive and Gram-negative bacteria and fungi. This Misgurnus anguillicaudatus (Oriental weatherloach) protein is Misgurin.